The following is a 340-amino-acid chain: Phenylalanine--tRNA ligase alpha subunit (340 aa).

E258 provides a ligand contact to Mg(2+).

The protein belongs to the class-II aminoacyl-tRNA synthetase family. Phe-tRNA synthetase alpha subunit type 1 subfamily. In terms of assembly, tetramer of two alpha and two beta subunits. Mg(2+) is required as a cofactor.

It is found in the cytoplasm. It carries out the reaction tRNA(Phe) + L-phenylalanine + ATP = L-phenylalanyl-tRNA(Phe) + AMP + diphosphate + H(+). The sequence is that of Phenylalanine--tRNA ligase alpha subunit from Corynebacterium efficiens (strain DSM 44549 / YS-314 / AJ 12310 / JCM 11189 / NBRC 100395).